Reading from the N-terminus, the 194-residue chain is Orotate phosphoribosyltransferase (194 aa).

Position 114-122 (glutamate 114–serine 122) interacts with 5-phospho-alpha-D-ribose 1-diphosphate. Positions 118 and 146 each coordinate orotate.

The protein belongs to the purine/pyrimidine phosphoribosyltransferase family. PyrE subfamily. In terms of assembly, homodimer. It depends on Mg(2+) as a cofactor.

The catalysed reaction is orotidine 5'-phosphate + diphosphate = orotate + 5-phospho-alpha-D-ribose 1-diphosphate. The protein operates within pyrimidine metabolism; UMP biosynthesis via de novo pathway; UMP from orotate: step 1/2. In terms of biological role, catalyzes the transfer of a ribosyl phosphate group from 5-phosphoribose 1-diphosphate to orotate, leading to the formation of orotidine monophosphate (OMP). This is Orotate phosphoribosyltransferase from Clostridioides difficile (strain 630) (Peptoclostridium difficile).